The chain runs to 890 residues: Translation initiation factor IF-2 (890 aa).

Disordered stretches follow at residues 31–164 (KLAQ…PAEP) and 189–266 (FKAP…ESLK). The segment covering 42–54 (SSSEKPSAKEKSV) has biased composition (basic and acidic residues). Residues 55–72 (KVALAATSTPTASAEQAS) show a composition bias toward low complexity. Residues 114-128 (PEPELEVVDEVCDES) show a composition bias toward acidic residues. 2 stretches are compositionally biased toward basic and acidic residues: residues 149–163 (PQEKELEPKPVKPAE) and 242–266 (PKRDAGKKNLTDFRDRSKKSDESLK). The tr-type G domain maps to 395-564 (IRSPIVAFMG…ALQAEVLELK (170 aa)). The segment at 404 to 411 (GHVDHGKT) is G1. 404–411 (GHVDHGKT) contributes to the GTP binding site. The tract at residues 429–433 (AITQH) is G2. The tract at residues 450–453 (DTPG) is G3. Residues 450–454 (DTPGH) and 504–507 (NKCD) each bind GTP. The segment at 504–507 (NKCD) is G4. The interval 540–542 (SAK) is G5.

The protein belongs to the TRAFAC class translation factor GTPase superfamily. Classic translation factor GTPase family. IF-2 subfamily.

The protein resides in the cytoplasm. One of the essential components for the initiation of protein synthesis. Protects formylmethionyl-tRNA from spontaneous hydrolysis and promotes its binding to the 30S ribosomal subunits. Also involved in the hydrolysis of GTP during the formation of the 70S ribosomal complex. This is Translation initiation factor IF-2 (infB) from Chlamydia pneumoniae (Chlamydophila pneumoniae).